A 90-amino-acid polypeptide reads, in one-letter code: uncharacterized protein (90 aa).

This is an uncharacterized protein from Homo sapiens (Human).